A 332-amino-acid polypeptide reads, in one-letter code: DNA-directed RNA polymerase subunit alpha (332 aa).

An alpha N-terminal domain (alpha-NTD) region spans residues 1 to 234; sequence MTVTANQVLR…DQLSVFGDFT (234 aa). Residues 248-332 are alpha C-terminal domain (alpha-CTD); it reads VDPVLLRPID…AGVASHGMLG (85 aa).

This sequence belongs to the RNA polymerase alpha chain family. In terms of assembly, homodimer. The RNAP catalytic core consists of 2 alpha, 1 beta, 1 beta' and 1 omega subunit. When a sigma factor is associated with the core the holoenzyme is formed, which can initiate transcription.

It catalyses the reaction RNA(n) + a ribonucleoside 5'-triphosphate = RNA(n+1) + diphosphate. Functionally, DNA-dependent RNA polymerase catalyzes the transcription of DNA into RNA using the four ribonucleoside triphosphates as substrates. The protein is DNA-directed RNA polymerase subunit alpha of Stenotrophomonas maltophilia (strain R551-3).